The chain runs to 456 residues: Neurexin-3-beta (456 aa).

Residues 1–35 form the signal peptide; that stretch reads MHLRIHARRNPPRRPAWTLGIWSLFWGCIVSSVWS. The Extracellular portion of the chain corresponds to 36–381; the sequence is SSNVASSSSS…EVIRESSSTT (346 aa). The tract at residues 41–63 is disordered; sequence SSSSSPGSHSQHEHHFHGSKHHS. Residues 52–63 show a composition bias toward basic residues; that stretch reads HEHHFHGSKHHS. A Laminin G-like domain is found at 82-282; that stretch reads ATYIFGKSGG…NPNIKINGSV (201 aa). Asp-134 and Ile-151 together coordinate Ca(2+). An N-linked (GlcNAc...) asparagine glycan is attached at Asn-181. 2 residues coordinate Ca(2+): Ile-233 and Asn-235. Residues Asn-279 and Asn-323 are each glycosylated (N-linked (GlcNAc...) asparagine). The interval 316–340 is disordered; the sequence is ATTTTRKNRSTASIQPTSDDLVSSA. Polar residues predominate over residues 325–340; it reads STASIQPTSDDLVSSA. O-linked (Xyl...) (heparan sulfate) serine glycosylation is present at Ser-339. Residues 382 to 402 traverse the membrane as a helical segment; it reads GMVVGIVAAAALCILILLYAM. The Cytoplasmic portion of the chain corresponds to 403–456; it reads YKYRNRDEGSYQVDETRNYISNSAQSNGTLLKEKPPSSKGGHKKQKNKDKEYYV. The disordered stretch occupies residues 424 to 456; the sequence is NSAQSNGTLLKEKPPSSKGGHKKQKNKDKEYYV.

Belongs to the neurexin family. In terms of assembly, weakly interacts with CBLN1 and CBLN2. Very weak binding, if any, to CBLN4. Specific isoforms bind neuroligins NLGN1, NLGN2 and NLGN3. Interacts with CLSTN3. Processed by alpha-secretase leading to the formation of an extracellular soluble protein as well as a C-terminal membrane-embedded fragment (CTF). Proteolysis of these CTFs by gamma-secretase releases intracellular domains (ICDs) and extracellular peptides. Post-translationally, O-glycosylated; contains heparan sulfate. Heparan sulfate attachment is required for synapse development by mediating interactions with neuroligins.

The protein localises to the presynaptic cell membrane. It localises to the secreted. In terms of biological role, neuronal cell surface protein that may be involved in cell recognition and cell adhesion. May mediate intracellular signaling. Functions as part of a trans-synaptic complex by binding to cerebellins and postsynaptic GRID1. This interaction helps regulate the activity of NMDA and AMPA receptors at hippocampal synapses without affecting synapse formation. NRXN3B-CBLN2-GRID1 complex transduce presynaptic signals into postsynaptic AMPAR response. The sequence is that of Neurexin-3-beta (NRXN3) from Bos taurus (Bovine).